Reading from the N-terminus, the 561-residue chain is Probable galacturonosyltransferase 9 (561 aa).

At 1 to 27 the chain is on the cytoplasmic side; that stretch reads MAVAFRGGRGGVGSGQSTGLRSFFSYR. The helical; Signal-anchor for type II membrane protein transmembrane segment at 28-48 threads the bilayer; that stretch reads IFISALFSFLFLATFSVVLNS. Residues 49–561 lie on the Lumenal side of the membrane; it reads SRHQPHQDHT…EFVQMCNFGL (513 aa). 4 N-linked (GlcNAc...) asparagine glycosylation sites follow: Asn-124, Asn-320, Asn-346, and Asn-426.

It belongs to the glycosyltransferase 8 family. Expressed in roots, inflorescences, siliques, leaves and stems.

It localises to the golgi apparatus membrane. It participates in glycan metabolism; pectin biosynthesis. Functionally, may be involved in pectin synthesis. The protein is Probable galacturonosyltransferase 9 (GAUT9) of Arabidopsis thaliana (Mouse-ear cress).